The chain runs to 219 residues: Large ribosomal subunit protein uL1 (219 aa).

Belongs to the universal ribosomal protein uL1 family. As to quaternary structure, part of the 50S ribosomal subunit.

In terms of biological role, binds directly to 23S rRNA. Probably involved in E site tRNA release. Functionally, protein L1 is also a translational repressor protein, it controls the translation of its operon by binding to its mRNA. The polypeptide is Large ribosomal subunit protein uL1 (Pyrococcus horikoshii (strain ATCC 700860 / DSM 12428 / JCM 9974 / NBRC 100139 / OT-3)).